The sequence spans 289 residues: Toxin tox21A (289 aa).

An N-terminal signal peptide occupies residues 1 to 14 (MNLYFLFFISTILA). A propeptide spanning residues 15–27 (AKPFNSFNKTSLI) is cleaved from the precursor. Positions 270-289 (DKDITVHENAGDPKSDSRRC) are disordered.

Contains several disulfide bonds. In terms of tissue distribution, posterior glands which appear to be connected with the stylet through a series of ducts.

It is found in the secreted. In terms of biological role, has contracting-paralyzing activity in insect larvae. This chain is Toxin tox21A, found in Pyemotes tritici (Straw itch mite).